Here is an 82-residue protein sequence, read N- to C-terminus: Small ribosomal subunit protein bS16 (82 aa).

Belongs to the bacterial ribosomal protein bS16 family.

The chain is Small ribosomal subunit protein bS16 from Glaesserella parasuis serovar 5 (strain SH0165) (Haemophilus parasuis).